We begin with the raw amino-acid sequence, 117 residues long: Large ribosomal subunit protein uL23 (117 aa).

This sequence belongs to the universal ribosomal protein uL23 family. As to quaternary structure, part of the 50S ribosomal subunit. Contacts protein L29, and trigger factor when it is bound to the ribosome.

Functionally, one of the early assembly proteins it binds 23S rRNA. One of the proteins that surrounds the polypeptide exit tunnel on the outside of the ribosome. Forms the main docking site for trigger factor binding to the ribosome. In Ruminiclostridium cellulolyticum (strain ATCC 35319 / DSM 5812 / JCM 6584 / H10) (Clostridium cellulolyticum), this protein is Large ribosomal subunit protein uL23.